A 179-amino-acid polypeptide reads, in one-letter code: B-cell acute lymphoblastic leukemia-expressed protein (179 aa).

Disordered regions lie at residues 1-20 (MMKDIIPASSWASEESTDLQ) and 65-86 (RDTPPPVTSPRGDGICVSRGKA). A compositionally biased stretch (polar residues) spans 10–20 (SWASEESTDLQ).

This Homo sapiens (Human) protein is B-cell acute lymphoblastic leukemia-expressed protein (BLACE).